We begin with the raw amino-acid sequence, 594 residues long: U3 small nucleolar RNA-associated protein 18 (594 aa).

Disordered stretches follow at residues 48 to 128 and 176 to 200; these read EQEM…WIDS and KWVD…SNNV. Composition is skewed to acidic residues over residues 49-72, 102-128, and 180-196; these read QEMD…DEAQ, TMDV…WIDS, and DESD…EEEG. The segment at 101 to 190 is interaction with UTP21; that stretch reads DTMDVDDEDD…ESDSELDDEE (90 aa). Phosphoserine occurs at positions 182 and 184. WD repeat units lie at residues 246–285, 290–334, 463–504, 513–554, and 560–593; these read PSHS…NHLV, LVGS…LTHS, GTTT…TSST, QLTT…VFSN, and TPLG…KLNH.

The protein belongs to the WD repeat UTP18 family. Interacts with snoRNA U3. Interacts with MPP10, UTP21 and UTP25. Component of the ribosomal small subunit (SSU) processome composed of at least 40 protein subunits and snoRNA U3.

It is found in the nucleus. The protein localises to the nucleolus. In terms of biological role, involved in nucleolar processing of pre-18S ribosomal RNA and ribosome assembly. This Saccharomyces cerevisiae (strain ATCC 204508 / S288c) (Baker's yeast) protein is U3 small nucleolar RNA-associated protein 18 (UTP18).